A 222-amino-acid chain; its full sequence is Pro-opiomelanocortin (222 aa).

An N-terminal signal peptide occupies residues 1–18 (MCPVWLLVAVVVVGGSRG). A propeptide spanning residues 19-90 (AVSQCWEHPS…SSSSSSSPQS (72 aa)) is cleaved from the precursor. 2 disordered regions span residues 56 to 98 (IPGN…SMEH) and 148 to 170 (EEEK…LQEK). Over residues 70–93 (PSSSSSFILPSSSSSSSSPQSKRS) the composition is skewed to low complexity. Residues 148-162 (EEEKAQEVMAEEEEE) show a composition bias toward acidic residues.

This sequence belongs to the POMC family. In terms of processing, specific enzymatic cleavages at paired basic residues yield the different active peptides.

It is found in the secreted. Its function is as follows. Stimulates the adrenal glands to release cortisol. Functionally, anorexigenic peptide. Increases the pigmentation of skin by increasing melanin production in melanocytes. In terms of biological role, increases the pigmentation of skin by increasing melanin production in melanocytes. Endogenous orexigenic opiate. Its function is as follows. Endogenous opiate. The sequence is that of Pro-opiomelanocortin (pomc) from Thunnus obesus (Bigeye tuna).